A 380-amino-acid polypeptide reads, in one-letter code: Flap endonuclease 1 (380 aa).

Residues 1–104 form an N-domain region; it reads MGIQGLAKLI…GELAKRSERR (104 aa). Arginine 19 is subject to Symmetric dimethylarginine; by PRMT5. Residue aspartate 34 coordinates Mg(2+). DNA contacts are provided by arginine 47 and arginine 70. An N6-acetyllysine modification is found at lysine 80. Aspartate 86 provides a ligand contact to Mg(2+). A symmetric dimethylarginine; by PRMT5 mark is found at arginine 100 and arginine 104. The I-domain stretch occupies residues 122 to 253; the sequence is EVEKFTKRLV…KRAVDLIQKH (132 aa). The Mg(2+) site is built by glutamate 158, glutamate 160, aspartate 179, and aspartate 181. A DNA-binding site is contributed by glutamate 158. Phosphoserine; by CDK2 is present on serine 187. Arginine 192 bears the Symmetric dimethylarginine; by PRMT5 mark. A Phosphoserine modification is found at serine 197. DNA-binding residues include glycine 231 and aspartate 233. Residue aspartate 233 participates in Mg(2+) binding. Residues serine 255, serine 293, and serine 335 each carry the phosphoserine modification. The segment at 327–380 is disordered; the sequence is RLSKSRQGSTQGRLDDFFKVTGSLSSAKRKEPEPKGSTKKKAKTGAAGKFKRGK. Threonine 336 carries the post-translational modification Phosphothreonine. Positions 336–344 are interaction with PCNA; it reads TQGRLDDFF. Position 354 is an N6-acetyllysine (lysine 354). Over residues 363 to 380 the composition is skewed to basic residues; it reads STKKKAKTGAAGKFKRGK. Position 364 is a phosphothreonine (threonine 364). An N6-acetyllysine mark is found at lysine 375, lysine 377, and lysine 380.

Belongs to the XPG/RAD2 endonuclease family. FEN1 subfamily. Interacts with PCNA. Three molecules of FEN1 bind to one PCNA trimer with each molecule binding to one PCNA monomer. PCNA stimulates the nuclease activity without altering cleavage specificity. The C-terminal domain binds EP300; can bind simultaneously to both PCNA and EP300. Interacts with DDX11; this interaction is direct and increases flap endonuclease activity of FEN1. Interacts with WDR4; regulating its endonuclease activity. Interacts with POLB. Requires Mg(2+) as cofactor. Acetylated by EP300. Acetylation inhibits both endonuclease and exonuclease activity. Acetylation also reduces DNA-binding activity but does not affect interaction with PCNA or EP300. In terms of processing, phosphorylation upon DNA damage induces relocalization to the nuclear plasma. Phosphorylation at Ser-187 by CDK2 occurs during late S-phase and results in dissociation from PCNA. Post-translationally, methylation at Arg-192 by PRMT5 impedes Ser-187 phosphorylation and increases interaction with PCNA.

It is found in the nucleus. Its subcellular location is the nucleolus. The protein localises to the nucleoplasm. It localises to the mitochondrion. Functionally, structure-specific nuclease with 5'-flap endonuclease and 5'-3' exonuclease activities involved in DNA replication and repair. During DNA replication, cleaves the 5'-overhanging flap structure that is generated by displacement synthesis when DNA polymerase encounters the 5'-end of a downstream Okazaki fragment. It enters the flap from the 5'-end and then tracks to cleave the flap base, leaving a nick for ligation. Also involved in the long patch base excision repair (LP-BER) pathway, by cleaving within the apurinic/apyrimidinic (AP) site-terminated flap. Acts as a genome stabilization factor that prevents flaps from equilibrating into structures that lead to duplications and deletions. Also possesses 5'-3' exonuclease activity on nicked or gapped double-stranded DNA, and exhibits RNase H activity. Also involved in replication and repair of rDNA and in repairing mitochondrial DNA. The sequence is that of Flap endonuclease 1 from Macaca fascicularis (Crab-eating macaque).